An 896-amino-acid polypeptide reads, in one-letter code: Sodium/hydrogen exchanger 5 (896 aa).

The Cytoplasmic portion of the chain corresponds to 1–45; the sequence is MLRAALSLLALPLAGAAEEPTQKPESPGEPPPGLELFRWQWHEVE. The chain crosses the membrane as a helical span at residues 46 to 66; that stretch reads APYLVALWILVASLAKIVFHL. Topologically, residues 67–73 are extracellular; it reads SRKVTSL. The helical transmembrane segment at 74–94 threads the bilayer; sequence VPESCLLILLGLVLGGIVLAV. The Cytoplasmic portion of the chain corresponds to 95 to 103; the sequence is AKKAEYQLE. Residues 104-124 traverse the membrane as a helical segment; it reads PGTFFLFLLPPIVLDSGYFMP. Topologically, residues 125-134 are extracellular; that stretch reads SRLFFDNLGA. Residues 135–155 form a helical membrane-spanning segment; the sequence is ILTYAVVGTLWNAFTTGAALW. Over 156–173 the chain is Cytoplasmic; sequence GLQQAGLVAPRVQAGLLD. Residues 174–194 traverse the membrane as a helical segment; the sequence is FLLFGSLISAVDPVAVLAVFE. Residues 195-200 are Extracellular-facing; it reads EVHVNE. An N-linked (GlcNAc...) asparagine glycan is attached at N199. Residues 201-221 traverse the membrane as a helical segment; that stretch reads TLFIIVFGESLLNDAVTVVLY. Topologically, residues 222-246 are cytoplasmic; sequence KVCNSFVEMGSANVQATDYLKGVAS. The chain crosses the membrane as a helical span at residues 247-267; sequence LFVVSLGGAAVGLVFAFLLAL. At 268 to 276 the chain is on the extracellular side; that stretch reads TTRFTKRVR. A helical membrane pass occupies residues 277 to 297; the sequence is IIEPLLVFLLAYAAYLTAEMA. Topologically, residues 298–331 are cytoplasmic; that stretch reads SLSAILAVTMCGLGCKKYVEANISHKSRTTVKYT. The chain crosses the membrane as a helical span at residues 332 to 352; that stretch reads MKTLASCAETVIFMLLGISAV. Over 353–360 the chain is Extracellular; that stretch reads DSSKWAWD. The helical transmembrane segment at 361-381 threads the bilayer; it reads SGLVLGTLIFILFFRALGVVL. Residues 382–398 lie on the Cytoplasmic side of the membrane; it reads QTWVLNQFRLVPLDKID. The chain crosses the membrane as a helical span at residues 399 to 419; sequence QVVMSYGGLRGAVAFALVILL. Residues 420-428 lie on the Extracellular side of the membrane; sequence DRTKVPAKD. Residues 429-449 form a helical membrane-spanning segment; that stretch reads YFVATTIVVVFFTVIVQGLTI. The Cytoplasmic portion of the chain corresponds to 450–896; it reads KPLVKWLKVK…CIQFNRGSRL (447 aa). The required for interaction with ARRB2 stretch occupies residues 576–721; sequence GSGACLDLQV…SETEKEDDEG (146 aa). Disordered regions lie at residues 658–686, 701–720, and 818–864; these read TKSKPRPRKTGRRKKDGVANAEATNGKHR, ESEEEEEESDSSETEKEDDE, and HPRG…QQQE. Residues 660–672 are compositionally biased toward basic residues; that stretch reads SKPRPRKTGRRKK. Polar residues predominate over residues 854-864; sequence ESSADLPQQQE.

The protein belongs to the monovalent cation:proton antiporter 1 (CPA1) transporter (TC 2.A.36) family. As to quaternary structure, interacts with CHP1 and CHP2. Interacts with ARRB2; facilitates the endocytosis of SLC9A5 from the plasma membrane. Interacts with RACK1; this interaction positively regulates SLC9A5 activity and promotes SLC9A5 localization to focal adhesions. Interacts with SCAMP2; this interaction regulates SLC9A5 cell-surface targeting and SLC9A5 activity. In terms of processing, phosphorylated by PRKAA2; promotes its accumulation at the cell surface. Phosphorylated by CSNK2A1 in a manner favoring its beta-arrestin binding and endocytosis. In terms of tissue distribution, mainly expressed in brain. Expressed in neurons of the central and peripheral nervous system. Expressed also in testis, spleen, and skeletal muscle.

It is found in the cell membrane. It localises to the recycling endosome membrane. Its subcellular location is the cell projection. The protein localises to the dendritic spine membrane. The protein resides in the synaptic cell membrane. It is found in the cell junction. It localises to the focal adhesion. The enzyme catalyses Na(+)(in) + H(+)(out) = Na(+)(out) + H(+)(in). Its activity is regulated as follows. ATP-depletion almost completely abolishes SLC9A5 activity. Inhibited by amiloride compounds. Functionally, plasma membrane Na(+)/H(+) antiporter. Mediates the electroneutral exchange of intracellular H(+) ions for extracellular Na(+) in 1:1 stoichiometry, thus regulating intracellular pH homeostasis, in particular in neural tissues. Acts as a negative regulator of dendritic spine growth. Plays a role in postsynaptic remodeling and signaling. Can also contribute to organellar pH regulation, with consequences for receptor tyrosine kinase trafficking. The chain is Sodium/hydrogen exchanger 5 from Homo sapiens (Human).